The following is a 195-amino-acid chain: Ephrin-A2 (195 aa).

Residues 1–16 (MELSLVVFTVVCWVSV) form the signal peptide. Positions 24–157 (SDRHAVYWNS…KLKVYVKPTS (134 aa)) constitute an Ephrin RBD domain. N-linked (GlcNAc...) asparagine glycosylation is present at asparagine 32. Cystine bridges form between cysteine 57–cysteine 97 and cysteine 85–cysteine 146. The GPI-anchor amidated cysteine moiety is linked to residue cysteine 174. Residues 175 to 195 (GADGPCLAVLMLLLVFLLAGV) constitute a propeptide, removed in mature form.

This sequence belongs to the ephrin family. As to quaternary structure, binds to the receptor tyrosine kinases epha2, epha3, epha4 and epha5. Interacts with epha8; activates epha8. Widespread expression in the embryo.

It localises to the cell membrane. Functionally, cell surface GPI-bound ligand for Eph receptors, a family of receptor tyrosine kinases which are crucial for migration, repulsion and adhesion during neuronal, vascular and epithelial development. Binds promiscuously Eph receptors residing on adjacent cells, leading to contact-dependent bidirectional signaling into neighboring cells. The signaling pathway downstream of the receptor is referred to as forward signaling while the signaling pathway downstream of the ephrin ligand is referred to as reverse signaling. With the epha2 receptor may play a role in bone remodeling through regulation of osteoclastogenesis and osteoblastogenesis. This is Ephrin-A2 (efna2) from Danio rerio (Zebrafish).